The following is a 430-amino-acid chain: Ribosomal protein uS12 methylthiotransferase RimO (430 aa).

The MTTase N-terminal domain maps to 2-119 (ISVYSISLGC…WPAMLAHALK (118 aa)). [4Fe-4S] cluster-binding residues include Cys11, Cys46, Cys81, Cys145, Cys149, and Cys152. One can recognise a Radical SAM core domain in the interval 131–361 (STGPSYAWLK…MEVQAEISEE (231 aa)). Residues 364 to 430 (AVHEGTRQQV…TRTYDLVALA (67 aa)) enclose the TRAM domain.

Belongs to the methylthiotransferase family. RimO subfamily. Requires [4Fe-4S] cluster as cofactor.

Its subcellular location is the cytoplasm. It catalyses the reaction L-aspartate(89)-[ribosomal protein uS12]-hydrogen + (sulfur carrier)-SH + AH2 + 2 S-adenosyl-L-methionine = 3-methylsulfanyl-L-aspartate(89)-[ribosomal protein uS12]-hydrogen + (sulfur carrier)-H + 5'-deoxyadenosine + L-methionine + A + S-adenosyl-L-homocysteine + 2 H(+). Its function is as follows. Catalyzes the methylthiolation of an aspartic acid residue of ribosomal protein uS12. This is Ribosomal protein uS12 methylthiotransferase RimO from Nitratidesulfovibrio vulgaris (strain ATCC 29579 / DSM 644 / CCUG 34227 / NCIMB 8303 / VKM B-1760 / Hildenborough) (Desulfovibrio vulgaris).